Consider the following 269-residue polypeptide: GTP cyclohydrolase FolE2 (269 aa).

Belongs to the GTP cyclohydrolase IV family.

The catalysed reaction is GTP + H2O = 7,8-dihydroneopterin 3'-triphosphate + formate + H(+). The protein operates within cofactor biosynthesis; 7,8-dihydroneopterin triphosphate biosynthesis; 7,8-dihydroneopterin triphosphate from GTP: step 1/1. Converts GTP to 7,8-dihydroneopterin triphosphate. This Burkholderia thailandensis (strain ATCC 700388 / DSM 13276 / CCUG 48851 / CIP 106301 / E264) protein is GTP cyclohydrolase FolE2.